The sequence spans 208 residues: Microtubule-associated protein Jupiter (208 aa).

Disordered stretches follow at residues 24–43 and 82–106; these read RPPGGGSSDIFGSEMPQTPR and RGQKTVDSHSRLFGEPTRPITPGKN. Ser-30 is subject to Phosphoserine. A Phosphothreonine modification is found at Thr-41. Basic and acidic residues predominate over residues 82–93; sequence RGQKTVDSHSRL. Phosphothreonine occurs at positions 98 and 102. Ser-111, Ser-139, and Ser-150 each carry phosphoserine. Residues 132-208 are disordered; the sequence is HYNGKSGSVS…PPGGYSSGLW (77 aa). Positions 137 to 150 are enriched in low complexity; the sequence is SGSVSSASSSVSSS. Polar residues-rich tracts occupy residues 151-165 and 178-189; these read TENLKMNSGSRSEGN and EYSQRQESSNGG.

This sequence belongs to the MAP Jupiter family. In terms of tissue distribution, ubiquitous expression throughout development. Expressed during cell division in the syncytial embryo. Expressed in developing photoreceptors of the eye imaginal disk of the third larval stage. In adults, highly expressed in neurons of the brain, concentrated in axons. In the adult ovaries, expression accumulates in the germarium and the polar follicular cells as well as in the oocyte along the microtubule network.

It is found in the nucleus. The protein resides in the cytoplasm. The protein localises to the cytoskeleton. Its subcellular location is the spindle. In terms of biological role, binds to all microtubule populations. This chain is Microtubule-associated protein Jupiter, found in Drosophila melanogaster (Fruit fly).